Here is a 305-residue protein sequence, read N- to C-terminus: Homoserine O-acetyltransferase (305 aa).

Cys142 functions as the Acyl-thioester intermediate in the catalytic mechanism. Substrate-binding residues include Lys163 and Ser192. His235 serves as the catalytic Proton acceptor. Residue Glu237 is part of the active site. Arg249 lines the substrate pocket.

The protein belongs to the MetA family.

Its subcellular location is the cytoplasm. It carries out the reaction L-homoserine + acetyl-CoA = O-acetyl-L-homoserine + CoA. It functions in the pathway amino-acid biosynthesis; L-methionine biosynthesis via de novo pathway; O-acetyl-L-homoserine from L-homoserine: step 1/1. Its function is as follows. Transfers an acetyl group from acetyl-CoA to L-homoserine, forming acetyl-L-homoserine. This is Homoserine O-acetyltransferase from Bacteroides thetaiotaomicron (strain ATCC 29148 / DSM 2079 / JCM 5827 / CCUG 10774 / NCTC 10582 / VPI-5482 / E50).